Consider the following 1438-residue polypeptide: DNA-directed RNA polymerase subunit beta' (1438 aa).

The Zn(2+) site is built by Cys72, Cys74, Cys87, and Cys90. The Mg(2+) site is built by Asp483, Asp485, and Asp487. Zn(2+)-binding residues include Cys831, Cys905, Cys912, and Cys915.

This sequence belongs to the RNA polymerase beta' chain family. The RNAP catalytic core consists of 2 alpha, 1 beta, 1 beta' and 1 omega subunit. When a sigma factor is associated with the core the holoenzyme is formed, which can initiate transcription. It depends on Mg(2+) as a cofactor. Requires Zn(2+) as cofactor.

The enzyme catalyses RNA(n) + a ribonucleoside 5'-triphosphate = RNA(n+1) + diphosphate. Functionally, DNA-dependent RNA polymerase catalyzes the transcription of DNA into RNA using the four ribonucleoside triphosphates as substrates. In Flavobacterium psychrophilum (strain ATCC 49511 / DSM 21280 / CIP 103535 / JIP02/86), this protein is DNA-directed RNA polymerase subunit beta'.